The following is a 377-amino-acid chain: tRNA(Met) cytidine acetate ligase (377 aa).

ATP is bound by residues 7–20 (VVEYNPFHNGHRYH), G101, N151, and R176.

This sequence belongs to the TmcAL family.

Its subcellular location is the cytoplasm. The catalysed reaction is cytidine(34) in elongator tRNA(Met) + acetate + ATP = N(4)-acetylcytidine(34) in elongator tRNA(Met) + AMP + diphosphate. Its function is as follows. Catalyzes the formation of N(4)-acetylcytidine (ac(4)C) at the wobble position of elongator tRNA(Met), using acetate and ATP as substrates. First activates an acetate ion to form acetyladenylate (Ac-AMP) and then transfers the acetyl group to tRNA to form ac(4)C34. This chain is tRNA(Met) cytidine acetate ligase, found in Limosilactobacillus reuteri (strain DSM 20016) (Lactobacillus reuteri).